The following is a 418-amino-acid chain: Geranylgeranyl pyrophosphate synthase (418 aa).

Residues 51–64 (TSSTGIPTSLNATP) show a composition bias toward polar residues. The tract at residues 51–73 (TSSTGIPTSLNATPTKPVLRPVP) is disordered. Lysine 143, arginine 146, and histidine 175 together coordinate isopentenyl diphosphate. Residues aspartate 182 and aspartate 186 each contribute to the Mg(2+) site. Arginine 191 provides a ligand contact to dimethylallyl diphosphate. Position 192 (arginine 192) interacts with isopentenyl diphosphate. Residues lysine 269, threonine 270, glutamine 305, lysine 322, and lysine 332 each coordinate dimethylallyl diphosphate.

It belongs to the FPP/GGPP synthase family. It depends on Mg(2+) as a cofactor.

It is found in the cytoplasm. The enzyme catalyses isopentenyl diphosphate + dimethylallyl diphosphate = (2E)-geranyl diphosphate + diphosphate. The catalysed reaction is isopentenyl diphosphate + (2E)-geranyl diphosphate = (2E,6E)-farnesyl diphosphate + diphosphate. It carries out the reaction isopentenyl diphosphate + (2E,6E)-farnesyl diphosphate = (2E,6E,10E)-geranylgeranyl diphosphate + diphosphate. It participates in isoprenoid biosynthesis; farnesyl diphosphate biosynthesis; farnesyl diphosphate from geranyl diphosphate and isopentenyl diphosphate: step 1/1. The protein operates within isoprenoid biosynthesis; geranyl diphosphate biosynthesis; geranyl diphosphate from dimethylallyl diphosphate and isopentenyl diphosphate: step 1/1. Its pathway is isoprenoid biosynthesis; geranylgeranyl diphosphate biosynthesis; geranylgeranyl diphosphate from farnesyl diphosphate and isopentenyl diphosphate: step 1/1. Functionally, catalyzes the trans-addition of the three molecules of IPP onto DMAPP to form geranylgeranyl pyrophosphate. This Fusarium fujikuroi (Bakanae and foot rot disease fungus) protein is Geranylgeranyl pyrophosphate synthase (GGS).